The primary structure comprises 800 residues: Internalin A (800 aa).

A signal peptide spans 1 to 35; it reads MRKKRYVWLKSILVAILVFGSGVWINTSNGTNAQA. The LRRNT domain maps to 36–76; that stretch reads ATITQDTPINQIFTDAALAEKMKTVLGKTNVTDTVSQTDLD. LRR repeat units lie at residues 77-98, 99-120, 121-142, 143-164, 165-186, 187-207, 208-229, 230-251, 252-273, 274-295, 296-317, 318-339, 340-361, 362-383, and 384-405; these read QVTTLQADRLGIKSIDGLEYLN, NLTQINFSNNQLTDITPLKDLT, KLVDILMNNNQIADITPLANLT, NLTGLTLFNNQITDIDPLKNLT, NLNRLELSSNTISDISALSGLT, NLQQLSFGNQVTDLKPLANLT, TLERLDISSNKVSDISVLAKLT, NLESLIATNNQISDITPLGILT, NLDELSLNGNQLKDIGTLASLT, NLTDLDLANNQISNLAPLSGLT, KLTELKLGANQISNISPLAGLT, ALTNLELNENQLEDISPISNLK, NLTYLTLYFNNISDISPVSSLT, KLQRLFFYNNKVSDVSSLANLT, and NINWLSAGHNQISDLTPLANLT. The LRRCT domain occupies 416–505; it reads AWTNAPVNYK…AIFNAKFHVD (90 aa). The B-1 repeat unit spans residues 518-587; the sequence is LLTEPAKPVK…TTSQTVDYQG (70 aa). The 3 X approximate tandem repeats, type B stretch occupies residues 518–706; it reads LLTEPAKPVK…ITLYAQFTKN (189 aa). The stretch at 588-657 is one B-2 repeat; it reads LLQEPTPPTK…STTQAVDYQG (70 aa). The stretch at 658-706 is one B-3 repeat; it reads LLKEPKAPTKAGYTFKGWYDEKTDGKKWDFATDKMPANDITLYAQFTKN. The interval 705-757 is disordered; the sequence is KNPVAPPTTGGNTPPTTNNGGNTTPPSANIPGSDTSNTSTGNSASTTSTMNAY. A compositionally biased stretch (low complexity) spans 711 to 753; sequence PTTGGNTPPTTNNGGNTTPPSANIPGSDTSNTSTGNSASTTST. Residues 767–771 carry the LPXTG sorting signal motif; the sequence is LPTTG. Residue threonine 770 is modified to Pentaglycyl murein peptidoglycan amidated threonine. The propeptide at 771–800 is removed by sortase A; the sequence is GDSDNALYLLLGLLAVGTAMALTKKARASK.

The protein belongs to the internalin family.

It localises to the secreted. It is found in the cell wall. In terms of biological role, mediates the entry of Listeria monocytogenes into cells. Binds to host receptor cadherin-1 (E-cadherin, CDH1). In Listeria monocytogenes serotype 1/2a (strain 10403S), this protein is Internalin A (inlA).